Here is a 474-residue protein sequence, read N- to C-terminus: MSKKLHIKTWGCQMNEYDSSKMADLLGEYQGYTLTEEASEADILLLNTCSIREKAQEKVFHQLGRWKTLKDKNPNLIIGVGGCVASQEGKAIKDRAQCVDIIFGPQTLHRLPEMIEQVRRGDKAVIDISFPEIEKFDRLPEPRAEGPTAFVSIMEGCSKYCSFCVVPYTRGEEVSRPSDDIILEIAQLAEQGVREVNLLGQNVNAYRGATHDGAICTFAELLRFVAAIDGIDRIRFTTSHPIEFTQDIIDVYEDTPELVSFLHLPVQSGSDRILTAMKRGHMAIEYKSIIRRLRKAREGIQISSDFIIGFPGETKEDFADTMKLIEDIGFDHSFSFIYSARPGTPAADLPDNVDMEEKKQRLAILQDRITQQAMRYSRHMMGTVQRILVEGPSVKNPMELRGRTENNRVVNFEGQPKHIGTFVDVEIVDVYTNSLRGVFIRGEDEMDLRRSLRPAEILAKRKQDDELGVTQFKP.

The 118-residue stretch at 3–120 (KKLHIKTWGC…LPEMIEQVRR (118 aa)) folds into the MTTase N-terminal domain. [4Fe-4S] cluster is bound by residues Cys12, Cys49, Cys83, Cys157, Cys161, and Cys164. The Radical SAM core domain occupies 143 to 375 (RAEGPTAFVS…QDRITQQAMR (233 aa)). In terms of domain architecture, TRAM spans 378–441 (RHMMGTVQRI…TNSLRGVFIR (64 aa)).

The protein belongs to the methylthiotransferase family. MiaB subfamily. As to quaternary structure, monomer. The cofactor is [4Fe-4S] cluster.

It is found in the cytoplasm. The catalysed reaction is N(6)-dimethylallyladenosine(37) in tRNA + (sulfur carrier)-SH + AH2 + 2 S-adenosyl-L-methionine = 2-methylsulfanyl-N(6)-dimethylallyladenosine(37) in tRNA + (sulfur carrier)-H + 5'-deoxyadenosine + L-methionine + A + S-adenosyl-L-homocysteine + 2 H(+). In terms of biological role, catalyzes the methylthiolation of N6-(dimethylallyl)adenosine (i(6)A), leading to the formation of 2-methylthio-N6-(dimethylallyl)adenosine (ms(2)i(6)A) at position 37 in tRNAs that read codons beginning with uridine. The protein is tRNA-2-methylthio-N(6)-dimethylallyladenosine synthase of Shewanella baltica (strain OS185).